The following is a 143-amino-acid chain: UPF0260 protein plu2141 (143 aa).

Belongs to the UPF0260 family.

The sequence is that of UPF0260 protein plu2141 from Photorhabdus laumondii subsp. laumondii (strain DSM 15139 / CIP 105565 / TT01) (Photorhabdus luminescens subsp. laumondii).